The chain runs to 356 residues: MEKLYINLDENSYWIYIGKGLLPTLGKHVAGADKILLITDENVEKYYGDQITQIVEGRILEKVILRPGEPTKNLGNVGHLLEIMLEKGLTRSSKVIALGGGVIGDIAGFTASIYMRGIDFIQVPTTLLAQVDSSVGGKTGVNLEQGKNMVGSFYQPKVVVIDIDLLKTLPHRELISGLGEIIKYGIIYDGEFFDYINENLWNLLALEETVVTKIIKRCCEIKAAIVSQDEQEMGVRKILNFGHTIGHGIEALTHYEKYTHGEAVILGMYYEAQIAKNRGYIDESYFRDIEMIIRKTGLDLNISQFILTDLLDAMTKDKKNKGGKISFILPRGKGNVQEVLLTPEELATFLYTYLYV.

NAD(+) is bound by residues 101 to 105 (GVIGD), 125 to 126 (TT), K138, and K147. Zn(2+) contacts are provided by E180, H243, and H260.

This sequence belongs to the sugar phosphate cyclases superfamily. Dehydroquinate synthase family. Co(2+) is required as a cofactor. It depends on Zn(2+) as a cofactor. Requires NAD(+) as cofactor.

The protein localises to the cytoplasm. The enzyme catalyses 7-phospho-2-dehydro-3-deoxy-D-arabino-heptonate = 3-dehydroquinate + phosphate. Its pathway is metabolic intermediate biosynthesis; chorismate biosynthesis; chorismate from D-erythrose 4-phosphate and phosphoenolpyruvate: step 2/7. Its function is as follows. Catalyzes the conversion of 3-deoxy-D-arabino-heptulosonate 7-phosphate (DAHP) to dehydroquinate (DHQ). This Alkaliphilus metalliredigens (strain QYMF) protein is 3-dehydroquinate synthase.